We begin with the raw amino-acid sequence, 510 residues long: NAD(P)H-quinone oxidoreductase subunit 2 B, chloroplastic (510 aa).

13 consecutive transmembrane segments (helical) span residues 24–44 (LLLF…GLIL), 57–77 (IPWL…ALLF), 99–119 (IFQF…VEYI), 124–144 (MAIT…MFLC), 150–170 (ITIF…SGYT), 183–203 (YLLM…WLYG), 229–249 (ISIA…PAPF), 295–315 (WHLL…LVAI), 323–343 (MLAY…IVGD), 347–367 (GYAS…GTFA), 395–415 (ALSS…AGFF), 418–438 (LHLF…IGLL), and 484–504 (MIVC…IIAI).

Belongs to the complex I subunit 2 family. In terms of assembly, NDH is composed of at least 16 different subunits, 5 of which are encoded in the nucleus.

The protein resides in the plastid. It localises to the chloroplast thylakoid membrane. The catalysed reaction is a plastoquinone + NADH + (n+1) H(+)(in) = a plastoquinol + NAD(+) + n H(+)(out). The enzyme catalyses a plastoquinone + NADPH + (n+1) H(+)(in) = a plastoquinol + NADP(+) + n H(+)(out). NDH shuttles electrons from NAD(P)H:plastoquinone, via FMN and iron-sulfur (Fe-S) centers, to quinones in the photosynthetic chain and possibly in a chloroplast respiratory chain. The immediate electron acceptor for the enzyme in this species is believed to be plastoquinone. Couples the redox reaction to proton translocation, and thus conserves the redox energy in a proton gradient. This is NAD(P)H-quinone oxidoreductase subunit 2 B, chloroplastic from Ceratophyllum demersum (Rigid hornwort).